A 482-amino-acid chain; its full sequence is tRNA sulfurtransferase (482 aa).

In terms of domain architecture, THUMP spans 61 to 165; the sequence is LAIRDALTRI…DDRLLLIKGR (105 aa). Residues 183–184, K265, G287, and Q296 contribute to the ATP site; that span reads LI. A disulfide bridge links C344 with C456. Residues 404–482 form the Rhodanese domain; sequence FGPNDVILDI…GFANVKVYRP (79 aa). C456 functions as the Cysteine persulfide intermediate in the catalytic mechanism.

It belongs to the ThiI family.

The protein localises to the cytoplasm. It catalyses the reaction [ThiI sulfur-carrier protein]-S-sulfanyl-L-cysteine + a uridine in tRNA + 2 reduced [2Fe-2S]-[ferredoxin] + ATP + H(+) = [ThiI sulfur-carrier protein]-L-cysteine + a 4-thiouridine in tRNA + 2 oxidized [2Fe-2S]-[ferredoxin] + AMP + diphosphate. The catalysed reaction is [ThiS sulfur-carrier protein]-C-terminal Gly-Gly-AMP + S-sulfanyl-L-cysteinyl-[cysteine desulfurase] + AH2 = [ThiS sulfur-carrier protein]-C-terminal-Gly-aminoethanethioate + L-cysteinyl-[cysteine desulfurase] + A + AMP + 2 H(+). The protein operates within cofactor biosynthesis; thiamine diphosphate biosynthesis. Functionally, catalyzes the ATP-dependent transfer of a sulfur to tRNA to produce 4-thiouridine in position 8 of tRNAs, which functions as a near-UV photosensor. Also catalyzes the transfer of sulfur to the sulfur carrier protein ThiS, forming ThiS-thiocarboxylate. This is a step in the synthesis of thiazole, in the thiamine biosynthesis pathway. The sulfur is donated as persulfide by IscS. This Salmonella choleraesuis (strain SC-B67) protein is tRNA sulfurtransferase.